The chain runs to 221 residues: Endonuclease V (221 aa).

Mg(2+) contacts are provided by Asp43 and Asp111.

Belongs to the endonuclease V family. Mg(2+) serves as cofactor.

It localises to the cytoplasm. The enzyme catalyses Endonucleolytic cleavage at apurinic or apyrimidinic sites to products with a 5'-phosphate.. Its function is as follows. DNA repair enzyme involved in the repair of deaminated bases. Selectively cleaves double-stranded DNA at the second phosphodiester bond 3' to a deoxyinosine leaving behind the intact lesion on the nicked DNA. This Azotobacter vinelandii (strain DJ / ATCC BAA-1303) protein is Endonuclease V.